The following is a 90-amino-acid chain: Small ribosomal subunit protein uS15c (90 aa).

This sequence belongs to the universal ribosomal protein uS15 family. As to quaternary structure, part of the 30S ribosomal subunit.

It localises to the plastid. The protein resides in the chloroplast. The chain is Small ribosomal subunit protein uS15c (rps15) from Liriodendron tulipifera (Tuliptree).